Consider the following 373-residue polypeptide: Queuine tRNA-ribosyltransferase (373 aa).

Aspartate 91 (proton acceptor) is an active-site residue. Substrate is bound by residues 91 to 95 (DSGGF), aspartate 145, and glutamine 187. The RNA binding stretch occupies residues 245–251 (GVGTPED). Residue aspartate 264 is the Nucleophile of the active site. Positions 269 to 273 (TRNAR) are RNA binding; important for wobble base 34 recognition. Positions 302, 304, 307, and 333 each coordinate Zn(2+).

Belongs to the queuine tRNA-ribosyltransferase family. Homodimer. Within each dimer, one monomer is responsible for RNA recognition and catalysis, while the other monomer binds to the replacement base PreQ1. Zn(2+) is required as a cofactor.

It catalyses the reaction 7-aminomethyl-7-carbaguanine + guanosine(34) in tRNA = 7-aminomethyl-7-carbaguanosine(34) in tRNA + guanine. Its pathway is tRNA modification; tRNA-queuosine biosynthesis. Catalyzes the base-exchange of a guanine (G) residue with the queuine precursor 7-aminomethyl-7-deazaguanine (PreQ1) at position 34 (anticodon wobble position) in tRNAs with GU(N) anticodons (tRNA-Asp, -Asn, -His and -Tyr). Catalysis occurs through a double-displacement mechanism. The nucleophile active site attacks the C1' of nucleotide 34 to detach the guanine base from the RNA, forming a covalent enzyme-RNA intermediate. The proton acceptor active site deprotonates the incoming PreQ1, allowing a nucleophilic attack on the C1' of the ribose to form the product. After dissociation, two additional enzymatic reactions on the tRNA convert PreQ1 to queuine (Q), resulting in the hypermodified nucleoside queuosine (7-(((4,5-cis-dihydroxy-2-cyclopenten-1-yl)amino)methyl)-7-deazaguanosine). This Syntrophobacter fumaroxidans (strain DSM 10017 / MPOB) protein is Queuine tRNA-ribosyltransferase.